The chain runs to 366 residues: GTPase Obg (366 aa).

The region spanning 1 to 162 is the Obg domain; the sequence is MRFVDEAVIK…KSLRLELKIL (162 aa). Positions 125-150 are disordered; it reads RGGKGNEHFKSSTMQAPRFSQPGEPG. The OBG-type G domain maps to 163–335; the sequence is ADAGLLGLPN…VVSEMWRMLA (173 aa). GTP contacts are provided by residues 169 to 176, 194 to 198, 218 to 221, 288 to 291, and 316 to 318; these read GLPNAGKS, FTTLV, DIPG, NKID, and SAL. Mg(2+) is bound by residues serine 176 and threonine 196.

It belongs to the TRAFAC class OBG-HflX-like GTPase superfamily. OBG GTPase family. In terms of assembly, monomer. It depends on Mg(2+) as a cofactor.

It localises to the cytoplasm. An essential GTPase which binds GTP, GDP and possibly (p)ppGpp with moderate affinity, with high nucleotide exchange rates and a fairly low GTP hydrolysis rate. Plays a role in control of the cell cycle, stress response, ribosome biogenesis and in those bacteria that undergo differentiation, in morphogenesis control. The chain is GTPase Obg from Oleidesulfovibrio alaskensis (strain ATCC BAA-1058 / DSM 17464 / G20) (Desulfovibrio alaskensis).